A 259-amino-acid chain; its full sequence is Probable ABC transporter arginine-binding protein ArtJ (259 aa).

Positions 1 to 25 (MIKQIGRFFRAFIFIMPLSLTSCES) are cleaved as a signal peptide. L-arginine is bound by residues asparagine 38, glutamate 45, alanine 96, glycine 97, serine 99, arginine 104, and phenylalanine 149.

Belongs to the bacterial solute-binding protein 3 family.

Its subcellular location is the secreted. The protein localises to the cell surface. In terms of biological role, probably part of an ABC transporter complex involved in arginine transport. Binds arginine. Interacts with host epithelial cells, suggesting a role in host-cell adhesion during infection. The protein is Probable ABC transporter arginine-binding protein ArtJ of Chlamydia pneumoniae (Chlamydophila pneumoniae).